The following is an 819-amino-acid chain: LPS-assembly protein LptD (819 aa).

The N-terminal stretch at 1 to 33 (MRQMKYQFKFNPLAAAIFTLLCGGSMQSSYADA) is a signal peptide.

It belongs to the LptD family. As to quaternary structure, component of the lipopolysaccharide transport and assembly complex. Interacts with LptE and LptA.

The protein resides in the cell outer membrane. Together with LptE, is involved in the assembly of lipopolysaccharide (LPS) at the surface of the outer membrane. The sequence is that of LPS-assembly protein LptD from Acinetobacter baylyi (strain ATCC 33305 / BD413 / ADP1).